The primary structure comprises 168 residues: MSLNRSEKEAVINEVTSLAAKAQTLVIAEYRGITVADMTKLRVDARSKGVSLSVLKNTLARRAVAGSQFDVVADQMTGPLIYGFSEDAVAAAKVVADFAKTNDKLVIRGGAFAGKALDVNGVKQLANIPSKEVLLAQLCGLLMSPISRTAVVLGALAAKKGEGEAAAA.

It belongs to the universal ribosomal protein uL10 family. In terms of assembly, part of the ribosomal stalk of the 50S ribosomal subunit. The N-terminus interacts with L11 and the large rRNA to form the base of the stalk. The C-terminus forms an elongated spine to which L12 dimers bind in a sequential fashion forming a multimeric L10(L12)X complex.

In terms of biological role, forms part of the ribosomal stalk, playing a central role in the interaction of the ribosome with GTP-bound translation factors. In Paracidovorax citrulli (strain AAC00-1) (Acidovorax citrulli), this protein is Large ribosomal subunit protein uL10.